A 394-amino-acid polypeptide reads, in one-letter code: Large ribosomal subunit protein bL27m (394 aa).

The transit peptide at 1–34 (MSFIKQVGKLIRPNDYSSSIFQTSFLNNVIQVRT) directs the protein to the mitochondrion. Disordered regions lie at residues 36-57 (TKRA…LGPK) and 145-181 (AEAE…QRAS). Basic and acidic residues predominate over residues 145–170 (AEAEKEENHMSRKEFLQQPELEKTRQ).

It belongs to the bacterial ribosomal protein bL27 family.

It is found in the mitochondrion. Its function is as follows. Component of the large subunit of mitochondrial ribosome. This Debaryomyces hansenii (strain ATCC 36239 / CBS 767 / BCRC 21394 / JCM 1990 / NBRC 0083 / IGC 2968) (Yeast) protein is Large ribosomal subunit protein bL27m (MRPL2).